The sequence spans 571 residues: Methionine--tRNA ligase (571 aa).

A 'HIGH' region motif is present at residues 10–20 (PYVNAVPHLGN). Cys143, Cys146, Cys156, and Cys159 together coordinate Zn(2+). A 'KMSKS' region motif is present at residues 333–337 (KFSKS). Lys336 contacts ATP.

The protein belongs to the class-I aminoacyl-tRNA synthetase family. MetG type 1 subfamily. Requires Zn(2+) as cofactor.

Its subcellular location is the cytoplasm. It carries out the reaction tRNA(Met) + L-methionine + ATP = L-methionyl-tRNA(Met) + AMP + diphosphate. Its function is as follows. Is required not only for elongation of protein synthesis but also for the initiation of all mRNA translation through initiator tRNA(fMet) aminoacylation. This Sulfolobus acidocaldarius (strain ATCC 33909 / DSM 639 / JCM 8929 / NBRC 15157 / NCIMB 11770) protein is Methionine--tRNA ligase.